Here is a 680-residue protein sequence, read N- to C-terminus: E3 ubiquitin-protein ligase Midline-1 (680 aa).

An RING-type zinc finger spans residues Cys10–Arg60. Residues Ser92 and Ser96 each carry the phosphoserine modification. 2 consecutive B box-type zinc fingers follow at residues Lys116–Ile165 and Gly172–Leu212. 12 residues coordinate Zn(2+): Cys119, Cys122, Cys134, Cys137, Cys142, Cys145, His150, His159, Cys175, His178, Cys198, and His204. Positions Arg205 to Glu264 form a coiled coil. In terms of domain architecture, COS spans Leu320–Leu379. One can recognise a Fibronectin type-III domain in the interval Pro384–Thr494. The span at Ser484–Pro498 shows a compositional bias: polar residues. Disordered stretches follow at residues Ser484–Pro503 and Asn516–Phe535. The B30.2/SPRY domain maps to Asn495–His672. Positions Asn516–Glu533 are enriched in basic and acidic residues. Residue Ser524 is modified to Phosphoserine.

The protein belongs to the TRIM/RBCC family. As to quaternary structure, homodimer or heterodimer with MID2. Interacts with IGBP1. In terms of processing, phosphorylated. As to expression, ubiquitously expressed in fetus and adult. At 9 dpc-10.5 dpc, highest expression found in frontonasal processes, branchial arches and CNS. From 12.5 dpc to 16.5 dpc, high levels found in rostral part of CNS. At 14.5 dpc, begins to be highly expressed in kidney and lung. At 16.5 dpc, highly expressed in the mucosa of the hindgut and cutaneous region of the stomach.

Its subcellular location is the cytoplasm. The protein localises to the cytoskeleton. It catalyses the reaction S-ubiquitinyl-[E2 ubiquitin-conjugating enzyme]-L-cysteine + [acceptor protein]-L-lysine = [E2 ubiquitin-conjugating enzyme]-L-cysteine + N(6)-ubiquitinyl-[acceptor protein]-L-lysine.. Functionally, has E3 ubiquitin ligase activity towards IGBP1, promoting its monoubiquitination, which results in deprotection of the catalytic subunit of protein phosphatase PP2A, and its subsequent degradation by polyubiquitination. In Mus musculus (Mouse), this protein is E3 ubiquitin-protein ligase Midline-1 (Mid1).